The following is a 635-amino-acid chain: Cationic amino acid transporter 2, vacuolar (635 aa).

Topologically, residues 1–48 (MGFLVDTQKEGGGHSWGYVRSLVRRKQVDSANGQSHGHQLARALTVPH) are cytoplasmic. The helical transmembrane segment at 49-69 (LVAIGVGATIGAGVYILVGTV) threads the bilayer. The Vacuolar segment spans residues 70–76 (AREHSGP). The helical transmembrane segment at 77-97 (SLALSFLIAGIAAGLSAFCYA) threads the bilayer. Over 98–108 (ELSSRCPSAGS) the chain is Cytoplasmic. Residues 109-131 (AYHYSYICVGEGVAWIIGWALIL) traverse the membrane as a helical segment. The Vacuolar portion of the chain corresponds to 132–171 (EYTIGGSAVARGISPNLALIFGGEDGLPAILARHQIPGLD). A helical membrane pass occupies residues 172 to 192 (IVVDPCAAILVFVVTGLLCMG). Over 193–200 (IKESTFAQ) the chain is Cytoplasmic. A helical membrane pass occupies residues 201–221 (GIVTAVNVCVLLFVIVAGSYL). Residues 222 to 235 (GFKTGWPGYELPTG) are Vacuolar-facing. Residues 236–256 (FFPFGVDGMFAGSATVFFAFI) form a helical membrane-spanning segment. Residues 257–280 (GFDSVASTAEEVRNPQRDLPIGIG) are Cytoplasmic-facing. A helical transmembrane segment spans residues 281-301 (LALLLCCSLYMMVSIVIVGLI). The Vacuolar portion of the chain corresponds to 302–324 (PYYAMDPDTPISSAFASHDMQWA). The helical transmembrane segment at 325–345 (VYLITLGAVMALCSALMGALL) threads the bilayer. Residues 346–376 (PQPRILMAMARDGLLPSIFSDINKRTQVPVK) are Cytoplasmic-facing. The chain crosses the membrane as a helical span at residues 377 to 397 (ATVATGLCAATLAFFMDVSQL). A topological domain (vacuolar) is located at residue Ala-398. The chain crosses the membrane as a helical span at residues 399 to 419 (GMVSVGTLLAFTMVAISVLIL). Residues 420-493 (RYVPPDEQPL…CLVLSEETRR (74 aa)) lie on the Cytoplasmic side of the membrane. The chain crosses the membrane as a helical span at residues 494 to 514 (IVAGWSIMFTCVGAFLLSYAA). Over 515–524 (SSLSFPGLIR) the chain is Vacuolar. The helical transmembrane segment at 525 to 545 (YPLCGVGGCLLLAGLIALSSI) threads the bilayer. The Cytoplasmic portion of the chain corresponds to 546 to 560 (DQDDARHTFGHSGGY). A helical transmembrane segment spans residues 561 to 581 (MCPFVPLLPIICILINMYLLV). The Vacuolar segment spans residues 582–585 (NLGS). A helical membrane pass occupies residues 586–606 (ATWARVSVWLLIGVIVYVFYG). At 607 to 635 (RKNSSLANAVYVTTAHAEEIYREHEGSLA) the chain is on the cytoplasmic side.

The protein belongs to the amino acid-polyamine-organocation (APC) superfamily. Cationic amino acid transporter (CAT) (TC 2.A.3.3) family. As to expression, expressed in roots, stems, flowers, leaves, and siliques.

The protein resides in the vacuole membrane. Permease involved in the transport of the cationic amino acids. The polypeptide is Cationic amino acid transporter 2, vacuolar (CAT2) (Arabidopsis thaliana (Mouse-ear cress)).